The sequence spans 260 residues: Thiazole synthase (260 aa).

The Schiff-base intermediate with DXP role is filled by lysine 102. 1-deoxy-D-xylulose 5-phosphate-binding positions include glycine 163, 189-190 (AG), and 211-212 (NT).

The protein belongs to the ThiG family. In terms of assembly, homotetramer. Forms heterodimers with either ThiH or ThiS.

Its subcellular location is the cytoplasm. It carries out the reaction [ThiS sulfur-carrier protein]-C-terminal-Gly-aminoethanethioate + 2-iminoacetate + 1-deoxy-D-xylulose 5-phosphate = [ThiS sulfur-carrier protein]-C-terminal Gly-Gly + 2-[(2R,5Z)-2-carboxy-4-methylthiazol-5(2H)-ylidene]ethyl phosphate + 2 H2O + H(+). It functions in the pathway cofactor biosynthesis; thiamine diphosphate biosynthesis. Its function is as follows. Catalyzes the rearrangement of 1-deoxy-D-xylulose 5-phosphate (DXP) to produce the thiazole phosphate moiety of thiamine. Sulfur is provided by the thiocarboxylate moiety of the carrier protein ThiS. In vitro, sulfur can be provided by H(2)S. This is Thiazole synthase from Citrifermentans bemidjiense (strain ATCC BAA-1014 / DSM 16622 / JCM 12645 / Bem) (Geobacter bemidjiensis).